Consider the following 444-residue polypeptide: COP9 signalosome complex subunit 2 (444 aa).

Positions 1–31 are disordered; the sequence is MSDNDDDFMCDDDEDYGLEYSEDSNSEPDVD. Residues 255-417 enclose the PCI domain; that stretch reads AHTDFFEAFK…QVLQLDKINS (163 aa).

This sequence belongs to the CSN2 family. In terms of assembly, component of the CSN complex, probably composed of CSN1b, alien/CSN2, CSN3, CSN4, CSN5, CSN6, CSN7 and CSN8. Interacts with Rpn6. In terms of tissue distribution, expressed during embryonic stages 11-14 in the muscle attachment sites (apodemes); pharynx attachment to the roof of the mouth and in the epidermis of the head for the dorsal and ventral prothoracic pharyngeal muscle attachment. From stage 16 onwards expression is seen in all thoracic and abdominal apodemes.

Its subcellular location is the cytoplasm. It localises to the nucleus. Component of the COP9 signalosome complex (CSN), a complex involved in various cellular and developmental processes. The CSN complex is an essential regulator of the ubiquitin (Ubl) conjugation pathway by mediating the deneddylation of the cullin subunits of the SCF-type E3 ligase complexes, leading to decrease the Ubl ligase activity of SCF. The CSN complex plays an essential role in oogenesis and embryogenesis and is required for proper photoreceptor R cell differentiation and promote lamina glial cell migration or axon targeting. It also promotes Ubl-dependent degradation of cyclin E (CycE) during early oogenesis. The sequence is that of COP9 signalosome complex subunit 2 from Drosophila melanogaster (Fruit fly).